Here is a 115-residue protein sequence, read N- to C-terminus: Large ribosomal subunit protein uL18 (115 aa).

A disordered region spans residues 1 to 29; it reads MISKPDKNKLRQKRHTRVRGKISGTSETP. Basic residues predominate over residues 10 to 20; sequence LRQKRHTRVRG.

This sequence belongs to the universal ribosomal protein uL18 family. As to quaternary structure, part of the 50S ribosomal subunit; part of the 5S rRNA/L5/L18/L25 subcomplex. Contacts the 5S and 23S rRNAs.

This is one of the proteins that bind and probably mediate the attachment of the 5S RNA into the large ribosomal subunit, where it forms part of the central protuberance. The sequence is that of Large ribosomal subunit protein uL18 from Lactococcus lactis subsp. lactis (strain IL1403) (Streptococcus lactis).